A 243-amino-acid chain; its full sequence is ABC transporter arginine-binding protein 1 (243 aa).

The signal sequence occupies residues 1–19; sequence MKKLVLAALLASFTFGASA.

Belongs to the bacterial solute-binding protein 3 family. In terms of assembly, the complex is composed of two ATP-binding proteins (ArtP), two transmembrane proteins (ArtM and ArtQ) and two solute-binding proteins (ArtJ and ArtI).

The protein resides in the periplasm. In terms of biological role, part of the ABC transporter complex ArtPIQMJ involved in arginine transport. Binds L-arginine with high affinity. The sequence is that of ABC transporter arginine-binding protein 1 (artJ) from Escherichia coli (strain K12).